The chain runs to 848 residues: Neurofilament medium polypeptide (848 aa).

Over residues 1 to 10 (MSYTLDSLGN) the composition is skewed to polar residues. The interval 1–51 (MSYTLDSLGNPSAYRRVTETRSSFSRVSGSPSSGFRSQSWSRGSPSTVSSS) is disordered. Residue S2 is modified to N-acetylserine. The tract at residues 2 to 102 (SYTLDSLGNP…KLSRSNEKEQ (101 aa)) is head. Positions 21–44 (RSSFSRVSGSPSSGFRSQSWSRGS) are enriched in low complexity. S30 is subject to Phosphoserine. The residue at position 42 (R42) is an Omega-N-methylarginine. Residue T47 is glycosylated (O-linked (GlcNAc) threonine). Residue S97 is modified to Phosphoserine. The IF rod domain occupies 99-410 (EKEQLQGLND…KLLEGEETRF (312 aa)). The interval 103 to 134 (LQGLNDRFAGYIEKVHYLEQQNKEIEAEIQAL) is coil 1A. Positions 135-147 (RQKQASHAQLGDA) are linker 1. Residues 148–246 (YDQEIRELRA…EEEVADLLAQ (99 aa)) are coil 1B. Phosphoserine is present on S224. Positions 247–263 (IQASHITVERKDYLKTD) are linker 12. The segment at 264 to 285 (ISTALKEIRSQLECHSDQNMHQ) is coil 2A. A linker 2 region spans residues 286–289 (AEEW). The interval 290–410 (FKCRYAKLTE…KLLEGEETRF (121 aa)) is coil 2B. Residue Y318 is modified to Phosphotyrosine. Residues S344, S416, and S428 each carry the phosphoserine modification. A tail region spans residues 411-848 (STFSGSITGP…AIVKEVTQGD (438 aa)). A glycan (O-linked (GlcNAc) threonine) is linked at T430. Phosphoserine occurs at positions 466 and 482. The segment at 482-785 (SAKEEKEEAE…GEDSSDDKVV (304 aa)) is disordered. Residues 488–498 (EEAEEKEEEPE) show a composition bias toward acidic residues. The span at 499–509 (AEKSPVKSPEA) shows a compositional bias: basic and acidic residues. S502 and S506 each carry phosphoserine. Over residues 510-533 (KEEEEEGEKEEEEEGQEEEEEEDE) the composition is skewed to acidic residues. Residues 534–553 (GVKSDQAEEGGSEKEGSSEK) are compositionally biased toward basic and acidic residues. A phosphoserine mark is found at S537, S545, S550, and S551. Residues 554 to 576 (DEGEQEEEEGETEAEGEGEEAEA) show a composition bias toward acidic residues. Position 565 is a phosphothreonine (T565). Over residues 577–604 (KEEKKIEGKVEEVAVKEEIKVEKPEKAK) the composition is skewed to basic and acidic residues. Phosphoserine is present on residues S605 and S610. Composition is skewed to basic and acidic residues over residues 611 to 677 (PVEE…KAVE) and 689 to 711 (SLEK…KAEE). A Phosphothreonine modification is found at T642. Phosphoserine occurs at positions 645, 669, 689, 715, 723, 753, and 769. Composition is skewed to basic and acidic residues over residues 720 to 732 (SDRS…KEDI) and 748 to 760 (TQEK…EEKG). Residues 771 to 785 (AEEKKGEDSSDDKVV) are compositionally biased toward basic and acidic residues.

The protein belongs to the intermediate filament family. As to quaternary structure, forms heterodimers with NEFL; which can further hetero-oligomerize (in vitro). Forms heterodimers with INA (in vitro). In terms of processing, there are a number of repeats of the tripeptide K-S-P, NFM is phosphorylated on a number of the serines in this motif. It is thought that phosphorylation of NFM results in the formation of interfilament cross bridges that are important in the maintenance of axonal caliber. Phosphorylation seems to play a major role in the functioning of the larger neurofilament polypeptides (NF-M and NF-H), the levels of phosphorylation being altered developmentally and coincidentally with a change in the neurofilament function. Post-translationally, phosphorylated in the head and rod regions by the PKC kinase PKN1, leading to the inhibition of polymerization. As to expression, expressed in the sciatic nerve (at protein level).

The protein resides in the cytoplasm. The protein localises to the cytoskeleton. It localises to the cell projection. It is found in the axon. In terms of biological role, neurofilaments usually contain three intermediate filament proteins: NEFL, NEFM, and NEFH which are involved in the maintenance of neuronal caliber. May additionally cooperate with the neuronal intermediate filament proteins PRPH and INA to form neuronal filamentous networks. This is Neurofilament medium polypeptide (Nefm) from Mus musculus (Mouse).